We begin with the raw amino-acid sequence, 199 residues long: Small ribosomal subunit protein uS4 (199 aa).

Positions 91–153 (ARLDNVVYRM…SKNFVVIKEA (63 aa)) constitute an S4 RNA-binding domain.

This sequence belongs to the universal ribosomal protein uS4 family. Part of the 30S ribosomal subunit. Contacts protein S5. The interaction surface between S4 and S5 is involved in control of translational fidelity.

Functionally, one of the primary rRNA binding proteins, it binds directly to 16S rRNA where it nucleates assembly of the body of the 30S subunit. In terms of biological role, with S5 and S12 plays an important role in translational accuracy. In Exiguobacterium sibiricum (strain DSM 17290 / CCUG 55495 / CIP 109462 / JCM 13490 / 255-15), this protein is Small ribosomal subunit protein uS4.